The primary structure comprises 404 residues: MTDIQADPAVTAADAAQADTSSPTAHQGKPANAIGLVVPERMHFAEPLQLRNGSQICGYDLMVETYGTLNADRSNAVLICHALNASHHVAGVHAEGEVGWWDNMVGPGKPVDTNRFFVIGVNNLGSCFGSTGPMSPHPETGLPYGARFPVVTVEDWVNAQARVADRFGIEQFAAVMGGSLGGMQALAWSLMYPDRLRHCVVVASTPKLSAQNIAFNEVARSAILSDPDFHGGDYYAHNVKPKRGLRVARMIGHITYLSDEDMAAKFGRELKAEDIRFSFDVEFQVESYLRYQGDKFAEYFDANTYLLITRALDYFDPALAYGGSLTKAVAHTKASYLVVSFMTDWRFAPARSRELVKALLDNKHPVTYGEIDAPHGHDAFLLEDARYHALVRAYYERIAQEIGA.

The segment covering 1–25 has biased composition (low complexity); the sequence is MTDIQADPAVTAADAAQADTSSPTA. Residues 1–30 form a disordered region; sequence MTDIQADPAVTAADAAQADTSSPTAHQGKP. Positions 75 to 384 constitute an AB hydrolase-1 domain; that stretch reads NAVLICHALN…HGHDAFLLED (310 aa). The active-site Nucleophile is the serine 179. Position 249 (arginine 249) interacts with substrate. Residues aspartate 344 and histidine 377 contribute to the active site. Substrate is bound at residue aspartate 378.

The protein belongs to the AB hydrolase superfamily. MetX family. Homodimer.

The protein resides in the cytoplasm. The catalysed reaction is L-homoserine + succinyl-CoA = O-succinyl-L-homoserine + CoA. It functions in the pathway amino-acid biosynthesis; L-methionine biosynthesis via de novo pathway; O-succinyl-L-homoserine from L-homoserine: step 1/1. Transfers a succinyl group from succinyl-CoA to L-homoserine, forming succinyl-L-homoserine. In Ralstonia pickettii (strain 12J), this protein is Homoserine O-succinyltransferase.